Here is a 131-residue protein sequence, read N- to C-terminus: Antiholin (131 aa).

Topologically, residues 1 to 15 (MTMIAWMQHFLETDE) are periplasmic. Cytoplasmic-facing segments span residues 1-52 (MTMI…SSFK) and 39-50 (FAKLNPNIKFSS). A helical membrane pass occupies residues 16 to 38 (TKLIYWLTFLMVCMVVDTVLGVL). The chain crosses the membrane as a helical span at residues 53–75 (IKTGVLIKVSEMILALLAVPFAV). Topologically, residues 76 to 78 (PFP) are periplasmic. Residues 79–101 (AGLPLLYTVYTALCVSEIYSIFG) form a helical membrane-spanning segment. At 102–131 (HLRLVDDKSDFLEILENFFKRTSGKNKEDK) the chain is on the cytoplasmic side.

It belongs to the bacteriophage holin family. phi29likevirus holin subfamily. In terms of assembly, homomultimer. Interacts with isoform Antiholin; this interaction blocks the holin homomultimerization and delays host cell lysis.

It localises to the host cell inner membrane. Accumulates harmlessly in the cytoplasmic membrane until it reaches a critical concentration that triggers the formation of micron-scale pores (holes) causing host cell membrane disruption and endolysin escape into the periplasmic space. Determines the precise timing of host cell lysis. Participates with the endolysin and spanin proteins in the sequential events which lead to the programmed host cell lysis releasing the mature viral particles from the host cell. Functionally, counteracts the aggregation of the holin molecules and thus of pore formation. The chain is Antiholin (14) from Bacillus subtilis (Bacteriophage PZA).